The chain runs to 252 residues: Imidazole glycerol phosphate synthase subunit HisF (252 aa).

Residues Asp11 and Asp130 contribute to the active site.

It belongs to the HisA/HisF family. In terms of assembly, heterodimer of HisH and HisF.

It is found in the cytoplasm. It catalyses the reaction 5-[(5-phospho-1-deoxy-D-ribulos-1-ylimino)methylamino]-1-(5-phospho-beta-D-ribosyl)imidazole-4-carboxamide + L-glutamine = D-erythro-1-(imidazol-4-yl)glycerol 3-phosphate + 5-amino-1-(5-phospho-beta-D-ribosyl)imidazole-4-carboxamide + L-glutamate + H(+). It participates in amino-acid biosynthesis; L-histidine biosynthesis; L-histidine from 5-phospho-alpha-D-ribose 1-diphosphate: step 5/9. In terms of biological role, IGPS catalyzes the conversion of PRFAR and glutamine to IGP, AICAR and glutamate. The HisF subunit catalyzes the cyclization activity that produces IGP and AICAR from PRFAR using the ammonia provided by the HisH subunit. This is Imidazole glycerol phosphate synthase subunit HisF from Pelotomaculum thermopropionicum (strain DSM 13744 / JCM 10971 / SI).